A 364-amino-acid polypeptide reads, in one-letter code: Cell division protein FtsZ 1 (364 aa).

GTP-binding positions include 47–48, 97–99, 134–136, Glu165, Arg169, and Asp212; these read GA, AGG, and GTG.

It belongs to the FtsZ family. As to quaternary structure, homodimer. Polymerizes to form a dynamic ring structure in a strictly GTP-dependent manner. Interacts directly with several other division proteins.

The protein localises to the cytoplasm. Functionally, essential cell division protein that forms a contractile ring structure (Z ring) at the future cell division site. The regulation of the ring assembly controls the timing and the location of cell division. One of the functions of the FtsZ ring is to recruit other cell division proteins to the septum to produce a new cell wall between the dividing cells. Binds GTP and shows GTPase activity. This is Cell division protein FtsZ 1 from Methanocaldococcus jannaschii (strain ATCC 43067 / DSM 2661 / JAL-1 / JCM 10045 / NBRC 100440) (Methanococcus jannaschii).